Reading from the N-terminus, the 114-residue chain is ATP synthase epsilon chain (114 aa).

The protein belongs to the ATPase epsilon chain family. As to quaternary structure, F-type ATPases have 2 components, CF(1) - the catalytic core - and CF(0) - the membrane proton channel. CF(1) has five subunits: alpha(3), beta(3), gamma(1), delta(1), epsilon(1). CF(0) has three main subunits: a, b and c.

It localises to the cell membrane. In terms of biological role, produces ATP from ADP in the presence of a proton gradient across the membrane. This is ATP synthase epsilon chain from Wolbachia pipientis wMel.